A 418-amino-acid chain; its full sequence is LL-diaminopimelate aminotransferase (418 aa).

Residues Tyr25 and Gly52 each coordinate substrate. Pyridoxal 5'-phosphate contacts are provided by residues Tyr78, 115 to 116, Tyr140, Asn190, Tyr221, and 248 to 250; these read SK and SFS. Substrate contacts are provided by Lys116, Tyr140, and Asn190. Position 251 is an N6-(pyridoxal phosphate)lysine (Lys251). Arg259 is a binding site for pyridoxal 5'-phosphate.

It belongs to the class-I pyridoxal-phosphate-dependent aminotransferase family. In terms of assembly, homodimer. It depends on pyridoxal 5'-phosphate as a cofactor.

The protein localises to the cytoplasm. It catalyses the reaction (2S,6S)-2,6-diaminopimelate + 2-oxoglutarate = (S)-2,3,4,5-tetrahydrodipicolinate + L-glutamate + H2O + H(+). The protein operates within amino-acid biosynthesis; L-lysine biosynthesis via DAP pathway; LL-2,6-diaminopimelate from (S)-tetrahydrodipicolinate (aminotransferase route): step 1/1. Involved in the synthesis of meso-diaminopimelate (m-DAP or DL-DAP), required for both lysine and peptidoglycan biosynthesis. Catalyzes the direct conversion of tetrahydrodipicolinate to LL-diaminopimelate, a reaction that requires three enzymes in E.coli. The protein is LL-diaminopimelate aminotransferase (dapL) of Methanocaldococcus jannaschii (strain ATCC 43067 / DSM 2661 / JAL-1 / JCM 10045 / NBRC 100440) (Methanococcus jannaschii).